A 130-amino-acid chain; its full sequence is Arsenate reductase 2.2 (130 aa).

The 102-residue stretch at 18–119 (RDPRIAVVDV…WELSGRPVCR (102 aa)) folds into the Rhodanese domain. The Cysteine persulfide intermediate role is filled by cysteine 70.

It carries out the reaction [glutaredoxin]-dithiol + arsenate + glutathione + H(+) = glutathionyl-S-S-[glutaredoxin] + arsenite + H2O. Functionally, possesses arsenate reductase activity in vitro. Catalyzes the reduction of arsenate [As(V)] to arsenite [As(III)]. May play a role in arsenic retention in roots. Possesses phosphatase activity towards p-nitrophenyl phosphate in vitro. In Oryza sativa subsp. japonica (Rice), this protein is Arsenate reductase 2.2 (ACR2.2).